The following is a 281-amino-acid chain: NADPH-dependent 7-cyano-7-deazaguanine reductase (281 aa).

Position 87–89 (87–89 (VES)) interacts with substrate. Position 89 to 90 (89 to 90 (SK)) interacts with NADPH. The active-site Thioimide intermediate is C188. The active-site Proton donor is D195. Position 227–228 (227–228 (HE)) interacts with substrate. Position 256 to 257 (256 to 257 (RG)) interacts with NADPH.

The protein belongs to the GTP cyclohydrolase I family. QueF type 2 subfamily. Homodimer.

The protein localises to the cytoplasm. It catalyses the reaction 7-aminomethyl-7-carbaguanine + 2 NADP(+) = 7-cyano-7-deazaguanine + 2 NADPH + 3 H(+). It functions in the pathway tRNA modification; tRNA-queuosine biosynthesis. Its function is as follows. Catalyzes the NADPH-dependent reduction of 7-cyano-7-deazaguanine (preQ0) to 7-aminomethyl-7-deazaguanine (preQ1). The polypeptide is NADPH-dependent 7-cyano-7-deazaguanine reductase (Aliivibrio fischeri (strain MJ11) (Vibrio fischeri)).